We begin with the raw amino-acid sequence, 559 residues long: MDIRRTVLWMIFSFSLLLLWNNWQIHNGQPALFGGPSPEQNAPATANNQAATNPASNTPAVPNAPAATSAPSSVPGSTAPAPAQAQEVVITTDVLRLTFSSTGAQIIRAELLKYPATAGSDQPMVLLDRSAGLTYTAQTGVIGAGQNFPTHLTPFAVTTNERELTGDKLVVRFEAESGGLRVIKTFTLDRGSYDVHVRHDVTNVGTAAQHPSVYLQLERDGNDPAGTSSFYHTFTGVAVYSEQDKFQKVTFSDIAKNKASYIKQADNGWIGIVQHYFATAWVPKEGTPRTNDLLQLQPNLFAARAIEALGEVAPGATVSSDAQLWVGPQDQQAMAAVAPGLELVVDYGWLTIIAKPLFTLMTWLHSLLGNWGWTIVALTVIIKAVFYPLASASYRSMARMKQVAPRLQALKEKYGDDRQKLNQAMMEMYRTEKINPLGGCLPMVVQIPVFIALYWVLLASVEMRGAPWILWIHDLSVRDPYFILPAVMMATMFLQIKLNPTPPDPVQAKVMMVMPLVFGGMMFFFPAGLVLYWCVNNTLSILQQWSITRSITRQTAKRG.

A helical membrane pass occupies residues 6–26 (TVLWMIFSFSLLLLWNNWQIH). Residues 34–80 (GGPSPEQNAPATANNQAATNPASNTPAVPNAPAATSAPSSVPGSTAP) are disordered. Low complexity predominate over residues 42 to 80 (APATANNQAATNPASNTPAVPNAPAATSAPSSVPGSTAP). The next 4 membrane-spanning stretches (helical) occupy residues 367–387 (LLGN…AVFY), 441–461 (LPMV…LASV), 480–500 (PYFI…KLNP), and 510–530 (VMMV…AGLV).

This sequence belongs to the OXA1/ALB3/YidC family. Type 1 subfamily. As to quaternary structure, interacts with the Sec translocase complex via SecD. Specifically interacts with transmembrane segments of nascent integral membrane proteins during membrane integration.

The protein localises to the cell inner membrane. In terms of biological role, required for the insertion and/or proper folding and/or complex formation of integral membrane proteins into the membrane. Involved in integration of membrane proteins that insert both dependently and independently of the Sec translocase complex, as well as at least some lipoproteins. Aids folding of multispanning membrane proteins. In Bordetella avium (strain 197N), this protein is Membrane protein insertase YidC.